A 716-amino-acid polypeptide reads, in one-letter code: DNA ligase (716 aa).

NAD(+) is bound by residues 49–53, 98–99, and Glu132; these read DAAYD and SL. Lys134 functions as the N6-AMP-lysine intermediate in the catalytic mechanism. Arg155, Glu192, Lys308, and Lys332 together coordinate NAD(+). Cys437, Cys439, Cys461, and Cys467 together coordinate Zn(2+). A BRCT domain is found at 638–716; that stretch reads KRNSPIATKT…EDEWLQLIGE (79 aa).

The protein belongs to the NAD-dependent DNA ligase family. LigA subfamily. The cofactor is Mg(2+). Mn(2+) is required as a cofactor.

It catalyses the reaction NAD(+) + (deoxyribonucleotide)n-3'-hydroxyl + 5'-phospho-(deoxyribonucleotide)m = (deoxyribonucleotide)n+m + AMP + beta-nicotinamide D-nucleotide.. In terms of biological role, DNA ligase that catalyzes the formation of phosphodiester linkages between 5'-phosphoryl and 3'-hydroxyl groups in double-stranded DNA using NAD as a coenzyme and as the energy source for the reaction. It is essential for DNA replication and repair of damaged DNA. In Bradyrhizobium sp. (strain ORS 278), this protein is DNA ligase.